A 234-amino-acid polypeptide reads, in one-letter code: GTP cyclohydrolase 1 type 2 homolog (234 aa).

Positions 61, 62, 80, 195, and 199 each coordinate a divalent metal cation.

The protein belongs to the GTP cyclohydrolase I type 2/NIF3 family. As to quaternary structure, homohexamer.

The sequence is that of GTP cyclohydrolase 1 type 2 homolog from Methanothermobacter thermautotrophicus (strain ATCC 29096 / DSM 1053 / JCM 10044 / NBRC 100330 / Delta H) (Methanobacterium thermoautotrophicum).